The primary structure comprises 588 residues: Aspartate--tRNA ligase (588 aa).

Glu-177 is an L-aspartate binding site. Residues 201 to 204 (QLFK) are aspartate. Residue Arg-223 coordinates L-aspartate. Residues 223–225 (RDE) and Gln-232 each bind ATP. His-451 lines the L-aspartate pocket. Glu-485 contacts ATP. Residue Arg-492 coordinates L-aspartate. Position 537 to 540 (537 to 540 (GLDR)) interacts with ATP.

Belongs to the class-II aminoacyl-tRNA synthetase family. Type 1 subfamily. As to quaternary structure, homodimer.

It is found in the cytoplasm. It catalyses the reaction tRNA(Asp) + L-aspartate + ATP = L-aspartyl-tRNA(Asp) + AMP + diphosphate. Its function is as follows. Catalyzes the attachment of L-aspartate to tRNA(Asp) in a two-step reaction: L-aspartate is first activated by ATP to form Asp-AMP and then transferred to the acceptor end of tRNA(Asp). This is Aspartate--tRNA ligase from Staphylococcus carnosus (strain TM300).